The following is a 229-amino-acid chain: Thylakoid lumenal 19 kDa protein, chloroplastic (229 aa).

Its subcellular location is the plastid. It is found in the chloroplast thylakoid lumen. This is Thylakoid lumenal 19 kDa protein, chloroplastic from Arabidopsis thaliana (Mouse-ear cress).